The primary structure comprises 377 residues: DnaJ-related protein SCJ1 (377 aa).

Positions Met1–Ala21 are cleaved as a signal peptide. The region spanning Asp23–Gly88 is the J domain. The CR-type zinc finger occupies Gly156–Asn237. 4 CXXCXGXG motif repeats span residues Cys169–Gly176, Cys185–Gly192, Cys211–Gly218, and Cys225–Lys232. A Cell attachment site motif is present at residues Arg288 to Asp290. Residues Lys374 to Leu377 carry the Prevents secretion from ER motif.

Its subcellular location is the endoplasmic reticulum lumen. In terms of biological role, regulates protein folding in the endoplasmic reticulum lumen. Probably acts as a J-protein for the Hsp70-type chaperone KAR2 by stimulating its ATP-dependent reaction cycle and initiating folding reactions. Also involved in the endoplasmic reticulum-associated degradation (ERAD) process. Cooperates with KAR2 and another J-protein JEM1 to facilitate the export of ERAD substrates to the cytoplasm by maintaining them in a translocation-competent state and preventing their aggregation in the endoplasmic reticulum lumen. The polypeptide is DnaJ-related protein SCJ1 (SCJ1) (Saccharomyces cerevisiae (strain ATCC 204508 / S288c) (Baker's yeast)).